A 112-amino-acid chain; its full sequence is uncharacterized protein (112 aa).

The region spanning 6-60 (LRQLRKAHKLTMEQLAEKIGIAKSSYGGYEAESKKPPLDKLVILARLYDVSVDYI) is the HTH cro/C1-type domain. The H-T-H motif DNA-binding region spans 17–36 (MEQLAEKIGIAKSSYGGYEA).

This is an uncharacterized protein from Bacillus subtilis (strain 168).